A 551-amino-acid chain; its full sequence is Serine beta-lactamase-like protein LACTB, mitochondrial (551 aa).

Residues 1–113 (MYRLLSSVTA…RAIESSRDLL (113 aa)) constitute a mitochondrion transit peptide. Residues 69–101 (PADPEASGTTELSHEQALSPGSPHTPAPPAARG) are disordered. Serine 162 acts as the Acyl-ester intermediate in catalysis. The tract at residues 237 to 287 (LKMVKGTPPPSDQEKELKEKGGKNNEKSDAPKAKVEQDSEARCRSAKPGKK) is disordered. Positions 248–279 (DQEKELKEKGGKNNEKSDAPKAKVEQDSEARC) are enriched in basic and acidic residues. 2 positions are modified to N6-succinyllysine: lysine 287 and lysine 288. N6-acetyllysine is present on residues lysine 301 and lysine 346.

Belongs to the peptidase S12 family. In terms of tissue distribution, expressed predominantly in liver.

The protein localises to the mitochondrion. Mitochondrial serine protease that acts as a regulator of mitochondrial lipid metabolism. Acts by decreasing protein levels of PISD, a mitochondrial enzyme that converts phosphatidylserine (PtdSer) to phosphatidylethanolamine (PtdEtn), thereby affecting mitochondrial lipid metabolism. It is unclear whether it acts directly by mediating proteolysis of PISD or by mediating proteolysis of another lipid metabolism protein. Acts as a tumor suppressor that has the ability to inhibit proliferation of multiple types of cancer cells: probably by promoting decreased levels of PISD, thereby affecting mitochondrial lipid metabolism. The protein is Serine beta-lactamase-like protein LACTB, mitochondrial of Mus musculus (Mouse).